The chain runs to 125 residues: Small ribosomal subunit protein uS12 (125 aa).

D89 carries the post-translational modification 3-methylthioaspartic acid.

It belongs to the universal ribosomal protein uS12 family. In terms of assembly, part of the 30S ribosomal subunit. Contacts proteins S8 and S17. May interact with IF1 in the 30S initiation complex.

Functionally, with S4 and S5 plays an important role in translational accuracy. In terms of biological role, interacts with and stabilizes bases of the 16S rRNA that are involved in tRNA selection in the A site and with the mRNA backbone. Located at the interface of the 30S and 50S subunits, it traverses the body of the 30S subunit contacting proteins on the other side and probably holding the rRNA structure together. The combined cluster of proteins S8, S12 and S17 appears to hold together the shoulder and platform of the 30S subunit. In Cupriavidus metallidurans (strain ATCC 43123 / DSM 2839 / NBRC 102507 / CH34) (Ralstonia metallidurans), this protein is Small ribosomal subunit protein uS12.